A 472-amino-acid polypeptide reads, in one-letter code: MIYIFGSGLAGLSAAISLHKSGYKVTIISKKINGGSSYWAKGGIAAAVGNDDSPELHKIDTLEVGDGLCDSKTVDYVTREIRYVVSTVEKWGFKFDDDLRLEGGHSKRRILHKTDDTGREITNFLLNLAKKKGINLIEDKLLALKVKDGKVAGFITEKGGSFDAEKVVLATGGYGYLFKFTSNPSTNIGDGIAIAFKAGALVSDTEFVQFHPTVTTFDGQAYLLTETLRGEGAILVNERNERFVFKYDSRGELAPRDVLSRAIYDQYKKGHTVYIDLSPIEDFDRKFPILSNYVKRYGKRLQVFPGVHYTIGGIRVNTRGESNIKGLYAIGEVTDTGLHGANRLASNSLAEDLVYGVNLVRYIDNWEGLSIDDVKEVIEVRLRNSSNRLSLEEIREYNWNYLGIVRNGEGLDKLVKIYESNDTFNDNASLVSLLSAKGALLRTESRGAHYREDYPNKSWEDGKRIYFMVSRN.

FAD-binding positions include 7–10 (SGLA), 36–43 (SSYWAKGG), and aspartate 190. Arginine 256 functions as the Proton donor/acceptor in the catalytic mechanism. FAD contacts are provided by residues glutamate 332 and 348-349 (SL).

The protein belongs to the FAD-dependent oxidoreductase 2 family. NadB subfamily. Requires FAD as cofactor.

It localises to the cytoplasm. It carries out the reaction L-aspartate + O2 = iminosuccinate + H2O2. The protein operates within cofactor biosynthesis; NAD(+) biosynthesis; iminoaspartate from L-aspartate (oxidase route): step 1/1. Functionally, catalyzes the oxidation of L-aspartate to iminoaspartate, the first step in the de novo biosynthesis of NAD(+). This chain is L-aspartate oxidase (nadB), found in Saccharolobus solfataricus (strain ATCC 35092 / DSM 1617 / JCM 11322 / P2) (Sulfolobus solfataricus).